The primary structure comprises 306 residues: Pantothenate kinase (306 aa).

An ATP-binding site is contributed by 91-98; it reads GSVAVGKS.

Belongs to the prokaryotic pantothenate kinase family.

The protein resides in the cytoplasm. The enzyme catalyses (R)-pantothenate + ATP = (R)-4'-phosphopantothenate + ADP + H(+). It functions in the pathway cofactor biosynthesis; coenzyme A biosynthesis; CoA from (R)-pantothenate: step 1/5. This is Pantothenate kinase from Streptococcus gordonii (strain Challis / ATCC 35105 / BCRC 15272 / CH1 / DL1 / V288).